The sequence spans 1914 residues: Fatty acid synthase beta subunit stcK (1914 aa).

Residues leucine 17–asparagine 395 are acetyltransferase (AT) domain. The enoyl reductase (ER) domain stretch occupies residues threonine 446–aspartate 692. A dehydratase (DH) domain region spans residues glycine 1009 to isoleucine 1509. A MaoC-like domain is found at phenylalanine 1398–glutamate 1532. A malonyl/palmitoyl transferase (MT/PT) domain region spans residues tyrosine 1548–serine 1900.

Belongs to the fungal fatty acid synthetase subunit beta family. As to quaternary structure, [Alpha(6)beta(6)] hexamers of two multifunctional subunits (alpha and beta).

The enzyme catalyses acetyl-CoA + n malonyl-CoA + 2n NADPH + 4n H(+) = a long-chain-acyl-CoA + n CoA + n CO2 + 2n NADP(+).. It catalyses the reaction holo-[ACP] + acetyl-CoA = acetyl-[ACP] + CoA. It carries out the reaction holo-[ACP] + malonyl-CoA = malonyl-[ACP] + CoA. The catalysed reaction is a (3R)-hydroxyacyl-[ACP] = a (2E)-enoyl-[ACP] + H2O. The enzyme catalyses a 2,3-saturated acyl-[ACP] + NAD(+) = a (2E)-enoyl-[ACP] + NADH + H(+). It catalyses the reaction (9Z)-octadecenoyl-[ACP] + H2O = (9Z)-octadecenoate + holo-[ACP] + H(+). It functions in the pathway mycotoxin biosynthesis; sterigmatocystin biosynthesis. Fatty acid synthase beta subunit; part of the gene cluster that mediates the biosynthesis of sterigmatocystin (ST), a polyketide-derived furanocoumarin which is part of the most toxic and carcinogenic compounds among the known mycotoxins. The first step in the biosynthesis of sterigmatocystin is the production of hexanoate by the fatty acid synthase (FAS) units stcJ and stcK. The polyketide backbone is assembled by the non-reducing polyketide synthase stcA by condensation of the starter hexanoyl-CoA and 7 malonyl-CoA extender units followed by cyclization and release of norsolorinic acid. Norsolorinic acid is the first stable intermediate in the biosynthesis of sterigmatocystin and is converted into averantin (AVN) by the ketoreductase stcE which reduces the hexanoate ketone to an alcohol. Averantin is then oxidized into 5'-hydroxyaverantin (HAVN) by the cytochrome P450 monooxygenase stcF. 5'-hydroxyaverantin is further converted to 5'-oxyaverantin (OAVN) by the 5'-hydroxyaverantin dehydrogenase stcG. The next step is the conversion of OAVN into averufin (AVF) which is catalyzed by a yet to be identified enzyme. The cytochrome P450 monooxygenase stcB and the flavin-binding monooxygenase stcW are both required for the conversion of averufin to 1-hydroxyversicolorone. The esterase stcI probably catalyzes the formation of versiconal hemiacetal acetate from 1-hydroxyversicolorone. The oxydoreductase stcN then probably catalyzes the biosynthetic step from versiconal to versicolorin B (VERB). The next step is performed by the versicolorin B desaturase stcL to produce versicolorin A (VERA). The ketoreductase stcU and the cytochrome P450 monooxygenase stcS are involved in the conversion of versicolorin A to demethylsterigmatocystin. The Baeyer-Villiger oxidas stcQ and the reductase stcR might be involved in the biosynthetic step from versicolorin A to demethylsterigmatocystin. The final step in the biosynthesis of sterigmatocystin is the methylation of demethylsterigmatocystin catalyzed by the methyltransferase stcP. This is Fatty acid synthase beta subunit stcK from Emericella nidulans (strain FGSC A4 / ATCC 38163 / CBS 112.46 / NRRL 194 / M139) (Aspergillus nidulans).